A 193-amino-acid polypeptide reads, in one-letter code: Small COPII coat GTPase SAR1 (193 aa).

The STAR; SAR1-N-terminal activation recruitment. Required for the activation and subsequent recruitment to ER membrane motif lies at 3 to 5 (FLW). The mediates recruitment to ER membranes stretch occupies residues 11-15 (VLNML). Asp-30 contacts Mg(2+). GDP-binding residues include Asn-31, Ala-32, Gly-33, Lys-34, Thr-35, and Thr-36. Asn-31 contributes to the GTP binding site. 4 residues coordinate GTP: Gly-33, Lys-34, Thr-35, and Thr-36. Asp-71 contributes to the Mg(2+) binding site. 5 residues coordinate GDP: Asn-130, Lys-131, Asp-133, Val-176, and Leu-177. GTP-binding residues include Asn-130, Lys-131, Asp-133, Val-176, and Leu-177.

Belongs to the small GTPase superfamily. SAR1 family. In terms of assembly, homodimer; upon association with membrane. Part of the coat protein complex II/COPII, composed of SEC23/24 and SEC13/31 heterodimers, that it helps recruit and assemble on endoplasmic reticulum (ER) membranes at ER exit sites.

It is found in the endoplasmic reticulum membrane. The protein localises to the golgi apparatus. The protein resides in the golgi stack membrane. Its subcellular location is the cytoplasm. It localises to the cytosol. The enzyme catalyses GTP + H2O = GDP + phosphate + H(+). Its activity is regulated as follows. Small GTPases activation is mediated by guanine exchange factors (GEF), while inactivation through hydrolysis of the bound GTP is stimulated by GTPase activating proteins (GAP). In terms of biological role, small GTPase that cycles between an active GTP-bound and an inactive GDP-bound state and mainly functions in vesicle-mediated endoplasmic reticulum (ER) to Golgi transport. The active GTP-bound form inserts into the endoplasmic reticulum membrane where it recruits the remainder of the coat protein complex II/COPII. The coat protein complex II assembling and polymerizing on endoplasmic reticulum membrane is responsible for both the sorting of cargos and the deformation and budding of membranes into vesicles destined to the Golgi. Plays a role in transporting the tyrosine kinase receptor let-23 from the endoplasmic reticulum to the plasma membrane of vulval precursor cells. The chain is Small COPII coat GTPase SAR1 from Caenorhabditis elegans.